A 168-amino-acid chain; its full sequence is Photosystem I assembly protein Ycf3 (168 aa).

TPR repeat units lie at residues 35 to 68 (AFTY…EIDP), 72 to 105 (SYIL…NPFL), and 120 to 153 (GEQA…TPGN).

It belongs to the Ycf3 family.

The protein resides in the plastid. It is found in the chloroplast thylakoid membrane. Essential for the assembly of the photosystem I (PSI) complex. May act as a chaperone-like factor to guide the assembly of the PSI subunits. The chain is Photosystem I assembly protein Ycf3 from Gossypium barbadense (Sea Island cotton).